We begin with the raw amino-acid sequence, 355 residues long: Guanine nucleotide-binding protein subunit beta-5a (355 aa).

The disordered stretch occupies residues 1-23; it reads MAAQEEPAQPGDSLATLKSESDT. 7 WD repeats span residues 63–102, 105–144, 153–194, 195–238, 239–278, 280–322, and 325–355; these read GHGN…KEHA, MPCT…NENL, MHTN…QSFH, GHAA…QSFE, SHDS…EVAI, SKES…RVSI, and GHEN…RIWA.

It belongs to the WD repeat G protein beta family. May interact with RGS9; this interaction stabilizes both proteins and increases RGS9 GTPase-activating protein (GAP) activity, hence accelerating the deactivation of D(2) dopamine receptor-mediated signaling.

It is found in the membrane. In terms of biological role, enhances GTPase-activating protein (GAP) activity of regulator of G protein signaling (RGS) proteins, such as RGS7 and RGS9, hence involved in the termination of the signaling initiated by the G protein coupled receptors (GPCRs) by accelerating the GTP hydrolysis on the G-alpha subunits, thereby promoting their inactivation. Increases RGS7 GTPase-activating protein (GAP) activity, thereby regulating mood and cognition. Increases RGS9 GTPase-activating protein (GAP) activity, hence contributes to the deactivation of G protein signaling initiated by D(2) dopamine receptors. Along with gnb5b, plays an important role in neuronal signaling, including in the parasympathetic, but not sympathetic, control of heart rate. The sequence is that of Guanine nucleotide-binding protein subunit beta-5a from Danio rerio (Zebrafish).